The sequence spans 338 residues: Lipoate-protein ligase A (338 aa).

In terms of domain architecture, BPL/LPL catalytic spans 29 to 216 (PATQRVLFLW…AFFAHYGERV (188 aa)). ATP is bound by residues Arg71, 76–79 (GAVF), and Lys134. Lys134 is a binding site for (R)-lipoate.

This sequence belongs to the LplA family. Monomer.

The protein resides in the cytoplasm. It carries out the reaction L-lysyl-[lipoyl-carrier protein] + (R)-lipoate + ATP = N(6)-[(R)-lipoyl]-L-lysyl-[lipoyl-carrier protein] + AMP + diphosphate + H(+). It functions in the pathway protein modification; protein lipoylation via exogenous pathway; protein N(6)-(lipoyl)lysine from lipoate: step 1/2. It participates in protein modification; protein lipoylation via exogenous pathway; protein N(6)-(lipoyl)lysine from lipoate: step 2/2. Catalyzes both the ATP-dependent activation of exogenously supplied lipoate to lipoyl-AMP and the transfer of the activated lipoyl onto the lipoyl domains of lipoate-dependent enzymes. This is Lipoate-protein ligase A from Salmonella typhimurium (strain LT2 / SGSC1412 / ATCC 700720).